A 329-amino-acid polypeptide reads, in one-letter code: GTP 3',8-cyclase (329 aa).

The Radical SAM core domain maps to 8–234; the sequence is AFARKFYYLR…QQRARSDGPA (227 aa). Position 17 (Arg17) interacts with GTP. Positions 24 and 28 each coordinate [4Fe-4S] cluster. An S-adenosyl-L-methionine-binding site is contributed by Tyr30. Cys31 lines the [4Fe-4S] cluster pocket. Arg68 is a binding site for GTP. Gly72 lines the S-adenosyl-L-methionine pocket. Thr99 provides a ligand contact to GTP. Ser123 is an S-adenosyl-L-methionine binding site. Lys160 contributes to the GTP binding site. Met194 contributes to the S-adenosyl-L-methionine binding site. Residues Cys257 and Cys260 each coordinate [4Fe-4S] cluster. 262–264 provides a ligand contact to GTP; that stretch reads RLR. Cys274 is a [4Fe-4S] cluster binding site.

Belongs to the radical SAM superfamily. MoaA family. Monomer and homodimer. [4Fe-4S] cluster is required as a cofactor.

The catalysed reaction is GTP + AH2 + S-adenosyl-L-methionine = (8S)-3',8-cyclo-7,8-dihydroguanosine 5'-triphosphate + 5'-deoxyadenosine + L-methionine + A + H(+). It functions in the pathway cofactor biosynthesis; molybdopterin biosynthesis. In terms of biological role, catalyzes the cyclization of GTP to (8S)-3',8-cyclo-7,8-dihydroguanosine 5'-triphosphate. In Pectobacterium atrosepticum (strain SCRI 1043 / ATCC BAA-672) (Erwinia carotovora subsp. atroseptica), this protein is GTP 3',8-cyclase.